The chain runs to 102 residues: Small ribosomal subunit protein uS10 (102 aa).

This sequence belongs to the universal ribosomal protein uS10 family. Part of the 30S ribosomal subunit.

In terms of biological role, involved in the binding of tRNA to the ribosomes. This Parafrankia sp. (strain EAN1pec) protein is Small ribosomal subunit protein uS10.